The following is a 403-amino-acid chain: MASQPPPPPKPWETRRIPGAGPGPGPGPTFQSADLGPTLMTRPGQPALTRVPPPILPRPSQQTGSSSVNTFRPAYSSFSSGYGAYGNSFYGGYSPYSYGYNGLGYNRLRVDDLPPSRFVQQAEESSRGAFQSIESIVHAFASVSMMMDATFSAVYNSFRAVLDVANHFSRLKIHFTKVFSAFALVRTIRYLYRRLQRMLGLRRGSENEDLWAESEGTVACLGAEDRAATSAKSWPIFLFFAVILGGPYLIWKLLSTHSDEVTDSINWASGEDDHVVARAEYDFAAVSEEEISFRAGDMLNLALKEQQPKVRGWLLASLDGQTTGLIPANYVKILGKRKGRKTVESSKVSKQQQSFTNPTLTKGATVADSLDEQEAAFESVFVETNKVPVAPDSIGKDGEKQDL.

Residues 1–11 (MASQPPPPPKP) are compositionally biased toward pro residues. The tract at residues 1–68 (MASQPPPPPK…PSQQTGSSSV (68 aa)) is disordered. Residues 1–134 (MASQPPPPPK…SSRGAFQSIE (134 aa)) are Peroxisomal matrix-facing. Residues 59 to 68 (PSQQTGSSSV) are compositionally biased toward polar residues. Residues 135–155 (SIVHAFASVSMMMDATFSAVY) traverse the membrane as a helical segment. Residues 145-233 (MMMDATFSAV…EDRAATSAKS (89 aa)) are targeting to peroxisomes. At 156 to 174 (NSFRAVLDVANHFSRLKIH) the chain is on the cytoplasmic side. A helical membrane pass occupies residues 175 to 192 (FTKVFSAFALVRTIRYLY). An interaction with PEX19 region spans residues 175–196 (FTKVFSAFALVRTIRYLYRRLQ). Residues 193 to 233 (RRLQRMLGLRRGSENEDLWAESEGTVACLGAEDRAATSAKS) lie on the Peroxisomal matrix side of the membrane. Residues 234-254 (WPIFLFFAVILGGPYLIWKLL) form a helical membrane-spanning segment. The Cytoplasmic portion of the chain corresponds to 255-403 (STHSDEVTDS…IGKDGEKQDL (149 aa)). The 65-residue stretch at 272–336 (DDHVVARAEY…PANYVKILGK (65 aa)) folds into the SH3 domain. At Ser-354 the chain carries Phosphoserine.

The protein belongs to the peroxin-13 family. In terms of assembly, interacts (via SH3 domain) with PEX14 (via SH3-binding motif); forming the PEX13-PEX14 docking complex. Interacts with PEX19.

Its subcellular location is the peroxisome membrane. Functionally, component of the PEX13-PEX14 docking complex, a translocon channel that specifically mediates the import of peroxisomal cargo proteins bound to PEX5 receptor. The PEX13-PEX14 docking complex forms a large import pore which can be opened to a diameter of about 9 nm. Mechanistically, PEX5 receptor along with cargo proteins associates with the PEX14 subunit of the PEX13-PEX14 docking complex in the cytosol, leading to the insertion of the receptor into the organelle membrane with the concomitant translocation of the cargo into the peroxisome matrix. Involved in the import of PTS1- and PTS2-type containing proteins. The polypeptide is Peroxisomal membrane protein PEX13 (Homo sapiens (Human)).